The sequence spans 102 residues: MNTLTTYLVIAAVLFCLGLLGILQRRNLVGMLISLELMLNGANLNFMAFNRFLAPEPAVGQIIALIVMGLAAAEAAIGLSIIFALFRRMHSINVERAQELRG.

Transmembrane regions (helical) follow at residues 3 to 23 (TLTT…LGIL), 29 to 49 (VGML…FMAF), and 62 to 82 (IIAL…LSII).

It belongs to the complex I subunit 4L family. As to quaternary structure, NDH-1 is composed of 14 different subunits. Subunits NuoA, H, J, K, L, M, N constitute the membrane sector of the complex.

The protein localises to the cell inner membrane. It carries out the reaction a quinone + NADH + 5 H(+)(in) = a quinol + NAD(+) + 4 H(+)(out). In terms of biological role, NDH-1 shuttles electrons from NADH, via FMN and iron-sulfur (Fe-S) centers, to quinones in the respiratory chain. The immediate electron acceptor for the enzyme in this species is believed to be ubiquinone. Couples the redox reaction to proton translocation (for every two electrons transferred, four hydrogen ions are translocated across the cytoplasmic membrane), and thus conserves the redox energy in a proton gradient. The sequence is that of NADH-quinone oxidoreductase subunit K 1 from Syntrophobacter fumaroxidans (strain DSM 10017 / MPOB).